A 234-amino-acid chain; its full sequence is Large ribosomal subunit protein uL1 (234 aa).

The protein belongs to the universal ribosomal protein uL1 family. Part of the 50S ribosomal subunit.

Binds directly to 23S rRNA. The L1 stalk is quite mobile in the ribosome, and is involved in E site tRNA release. Functionally, protein L1 is also a translational repressor protein, it controls the translation of the L11 operon by binding to its mRNA. The protein is Large ribosomal subunit protein uL1 of Helicobacter pylori (strain Shi470).